A 244-amino-acid polypeptide reads, in one-letter code: Small ribosomal subunit protein eS4 (244 aa).

The 64-residue stretch at 43-106 (LPLLLVVRDV…DETYLVLFDE (64 aa)) folds into the S4 RNA-binding domain.

It belongs to the eukaryotic ribosomal protein eS4 family.

This is Small ribosomal subunit protein eS4 from Methanococcus maripaludis (strain DSM 14266 / JCM 13030 / NBRC 101832 / S2 / LL).